The following is a 177-amino-acid chain: 3-hydroxydecanoyl-[acyl-carrier-protein] dehydratase (177 aa).

Histidine 71 is a catalytic residue.

It belongs to the thioester dehydratase family. FabA subfamily. In terms of assembly, homodimer.

The protein resides in the cytoplasm. It catalyses the reaction a (3R)-hydroxyacyl-[ACP] = a (2E)-enoyl-[ACP] + H2O. It carries out the reaction (3R)-hydroxydecanoyl-[ACP] = (2E)-decenoyl-[ACP] + H2O. The catalysed reaction is (2E)-decenoyl-[ACP] = (3Z)-decenoyl-[ACP]. The protein operates within lipid metabolism; fatty acid biosynthesis. Necessary for the introduction of cis unsaturation into fatty acids. Catalyzes the dehydration of (3R)-3-hydroxydecanoyl-ACP to E-(2)-decenoyl-ACP and then its isomerization to Z-(3)-decenoyl-ACP. Can catalyze the dehydratase reaction for beta-hydroxyacyl-ACPs with saturated chain lengths up to 16:0, being most active on intermediate chain length. The polypeptide is 3-hydroxydecanoyl-[acyl-carrier-protein] dehydratase (Wigglesworthia glossinidia brevipalpis).